The primary structure comprises 414 residues: Serine/arginine-rich splicing factor SR45 (414 aa).

2 disordered regions span residues 1 to 95 (MAKP…KAVQ) and 175 to 414 (LPPR…PRKT). 2 stretches are compositionally biased toward low complexity: residues 10-34 (SPSVSGSSSRSSSRSRSGSSPSRSI) and 42-60 (RSLSSSSSPSRSVSSGSRS). Residues 62-69 (PRRGKSPA) carry the Nuclear localization signal 1 motif. Position 77 is a phosphoserine (serine 77). Positions 98 to 176 (LVLHVDSLSR…KVVKATFTLP (79 aa)) constitute an RRM domain. A compositionally biased stretch (low complexity) spans 176–191 (PPRQKVSSPPKPVSAA). The span at 205–220 (DAEKDGGPRRPRETSP) shows a compositional bias: basic and acidic residues. Positions 218-219 (TS) are required for isoform 1 function in petal development. Positions 228–243 (PRRRSPLPRRGLSPRR) are enriched in basic residues. A Nuclear localization signal 2 motif is present at residues 229 to 236 (RRRSPLPR). Serine 256 carries the phosphoserine modification. Short sequence motifs (nuclear localization signal) lie at residues 284-291 (PRRYRSPP), 318-325 (PRRLRSPP), and 338-345 (IRRPGRSR). Basic residues-rich tracts occupy residues 285 to 343 (RRYR…RPGR) and 352 to 363 (RKGRGPAGRRGR). Low complexity predominate over residues 364–373 (SSSYSSSPSP). Residues 373–380 (PRRIPRKI) carry the Nuclear localization signal 6 motif. Residues 375–394 (RIPRKISRSRSPKRPLRGKR) show a composition bias toward basic residues. Pro residues predominate over residues 404–414 (SPPPPPPPRKT).

The protein belongs to the splicing factor SR family. SR45 subfamily. Component of the spliceosome. Interacts with AFC2, U2AF35A, U2AF35B, RNU1, SCL33 and SKIP. The interaction with AFC2 depends on phosphorylation status. Interaction with RNU1 defines initial 5' splice sites and interaction with U2AF35B 3' splice sites in the early stage of spliceosome assembly. In terms of processing, phosphorylated by AFC2. The phosphorylation status regulates intranuclear distribution. Especially present in actively growing regions and dividing cells. Mostly expressed in roots (primary and secondary root meristem), shoot apical meristem (SAM), leaf primordia, pollen and inflorescence, and, to a lower extent, in leaves, vascular tissue, hydathode and fruits.

It is found in the nucleus speckle. The protein localises to the nucleus. It localises to the nucleoplasm. Functionally, involved in 5' and 3' splicing site selection of introns, and may bridge the 5' and 3' components of the spliceosome. Isoform 1 is required during flower petal development and isoform 2 is involved in root growth. Negatively regulates glucose and abscisic acid (ABA) signaling during early seedling development. Involved in the RNA-directed DNA methylation pathway. Modulates KIN10 stability in response to sugars, probably through the splicing regulation of 5PTASE13, a protein implicated in the proteasomal degradation of KIN10. This chain is Serine/arginine-rich splicing factor SR45, found in Arabidopsis thaliana (Mouse-ear cress).